The chain runs to 145 residues: 6-pyruvoyl tetrahydrobiopterin synthase (145 aa).

A Phosphoserine; by PKG modification is found at Ser19. His24 contributes to the Zn(2+) binding site. A Phosphoserine modification is found at Ser28. Residue Cys43 is the Proton acceptor of the active site. Positions 49 and 51 each coordinate Zn(2+). His90 (charge relay system) is an active-site residue. Phosphotyrosine is present on Tyr128. The Charge relay system role is filled by Glu134.

This sequence belongs to the PTPS family. Homohexamer formed of two homotrimers in a head to head fashion. The cofactor is Zn(2+). Post-translationally, phosphorylation of Ser-19 is required for maximal enzyme activity.

The catalysed reaction is 7,8-dihydroneopterin 3'-triphosphate = 6-pyruvoyl-5,6,7,8-tetrahydropterin + triphosphate + H(+). It participates in cofactor biosynthesis; tetrahydrobiopterin biosynthesis; tetrahydrobiopterin from 7,8-dihydroneopterin triphosphate: step 1/3. Functionally, involved in the biosynthesis of tetrahydrobiopterin, an essential cofactor of aromatic amino acid hydroxylases. Catalyzes the transformation of 7,8-dihydroneopterin triphosphate into 6-pyruvoyl tetrahydropterin. This Homo sapiens (Human) protein is 6-pyruvoyl tetrahydrobiopterin synthase (PTS).